Reading from the N-terminus, the 91-residue chain is LYR motif-containing protein 4 (91 aa).

Pantetheine 4'-phosphate contacts are provided by R6 and K44. K47 carries the post-translational modification N6-succinyllysine.

The protein belongs to the complex I LYR family. In terms of assembly, homodimer. Component of the mitochondrial core iron-sulfur cluster (ISC) complex composed of NFS1, LYRM4, NDUFAB1, ISCU, FXN, and FDX2; this complex is a heterohexamer containing two copies of each monomer. Component of the cyteine desulfurase complex composed of NFS1, LYRM4 and NDUFAB1; this complex contributes to the stability and cysteine desulfurase activity of NFS1. Interacts with FXN; this interaction is nickel-dependent. Interacts with the cytoplasmic form of NFS1; the complex increases the stability of NFS1. Forms a complex with the cytoplasmic form of NFS1; this complex increases the stability and cysteine desulfurase activity of NFS1. Interacts with NFS1.

It is found in the mitochondrion. It localises to the nucleus. It functions in the pathway cofactor biosynthesis; iron-sulfur cluster biosynthesis. Functionally, stabilizing factor, of the core iron-sulfur cluster (ISC) assembly complex, that regulates, in association with NDUFAB1, the stability and the cysteine desulfurase activity of NFS1 and participates in the [2Fe-2S] clusters assembly on the scaffolding protein ISCU. The core iron-sulfur cluster (ISC) assembly complex is involved in the de novo synthesis of a [2Fe-2S] cluster, the first step of the mitochondrial iron-sulfur protein biogenesis. This process is initiated by the cysteine desulfurase complex (NFS1:LYRM4:NDUFAB1) that produces persulfide which is delivered on the scaffold protein ISCU in a FXN-dependent manner. Then this complex is stabilized by FDX2 which provides reducing equivalents to accomplish the [2Fe-2S] cluster assembly. Finally, the [2Fe-2S] cluster is transferred from ISCU to chaperone proteins, including HSCB, HSPA9 and GLRX5. May also participates in the iron-sulfur protein biogenesis in the cytoplasm through its interaction with the cytoplasmic form of NFS1. The protein is LYR motif-containing protein 4 of Bos taurus (Bovine).